The primary structure comprises 737 residues: DNA polymerase iota (737 aa).

A UmuC domain is found at 17 to 231 (IIHLDMDYFY…GDLKRVTGIG (215 aa)). Residue aspartate 21 participates in Mg(2+) binding. Residues tyrosine 26 and arginine 58 each contribute to the a 2'-deoxyribonucleoside 5'-triphosphate site. Aspartate 113 provides a ligand contact to Mg(2+). Residue glutamate 114 is part of the active site. 2 DNA-binding regions span residues 212 to 277 (TYAE…FGRD) and 288 to 413 (KTIG…SKFQ). 4 disordered regions span residues 443–464 (TSLTSPTAESPTSDECAFRSSP), 482–515 (SPVPMLLDNGSESAATNSDFSDFSETEVEPSPKK), 557–581 (DSEKDFPMSTTPSTSTSAPAPRFRT), and 607–643 (LSSNASSTASSPLPSPMDDSIAMSAPSTTTLPFPSPT). Residues 491–502 (GSESAATNSDFS) are compositionally biased toward polar residues. 3 stretches are compositionally biased toward low complexity: residues 563–577 (PMSTTPSTSTSAPAP), 607–618 (LSSNASSTASSP), and 632–643 (PSTTTLPFPSPT). Positions 669–686 (VDAEVFKELPVELQTELI) match the Ubiquitin-binding (UBM) motif.

This sequence belongs to the DNA polymerase type-Y family. Requires Mg(2+) as cofactor. Mn(2+) serves as cofactor.

It localises to the nucleus. It carries out the reaction DNA(n) + a 2'-deoxyribonucleoside 5'-triphosphate = DNA(n+1) + diphosphate. Error-prone DNA polymerase specifically involved in DNA repair. Plays an important role in translesion synthesis, where the normal high-fidelity DNA polymerases cannot proceed and DNA synthesis stalls. Favors Hoogsteen base-pairing in the active site. Inserts the correct base with higher fidelity opposite an adenosine template. Exhibits low fidelity and efficiency opposite a thymidine template, where it will preferentially insert guanosine. Forms a Schiff base with 5'-deoxyribose phosphate at abasic sites, but may not have lyase activity. The chain is DNA polymerase iota from Drosophila melanogaster (Fruit fly).